The sequence spans 94 residues: DNA-directed RNA polymerase subunit omega (94 aa).

This sequence belongs to the RNA polymerase subunit omega family. The RNAP catalytic core consists of 2 alpha, 1 beta, 1 beta' and 1 omega subunit. When a sigma factor is associated with the core the holoenzyme is formed, which can initiate transcription.

The enzyme catalyses RNA(n) + a ribonucleoside 5'-triphosphate = RNA(n+1) + diphosphate. Its function is as follows. Promotes RNA polymerase assembly. Latches the N- and C-terminal regions of the beta' subunit thereby facilitating its interaction with the beta and alpha subunits. In Parafrankia sp. (strain EAN1pec), this protein is DNA-directed RNA polymerase subunit omega.